A 473-amino-acid polypeptide reads, in one-letter code: Fumarate hydratase class II (473 aa).

Substrate-binding positions include 104–106 (SGT), 128–131 (HPND), 138–140 (SSN), and threonine 186. Histidine 187 (proton donor/acceptor) is an active-site residue. The active site involves serine 318. Substrate is bound by residues serine 319 and 324-326 (KVN).

Belongs to the class-II fumarase/aspartase family. Fumarase subfamily. As to quaternary structure, homotetramer.

It is found in the cytoplasm. It carries out the reaction (S)-malate = fumarate + H2O. The protein operates within carbohydrate metabolism; tricarboxylic acid cycle; (S)-malate from fumarate: step 1/1. Functionally, involved in the TCA cycle. Catalyzes the stereospecific interconversion of fumarate to L-malate. The polypeptide is Fumarate hydratase class II (Corynebacterium efficiens (strain DSM 44549 / YS-314 / AJ 12310 / JCM 11189 / NBRC 100395)).